A 274-amino-acid chain; its full sequence is Protein RecA (274 aa).

An ATP-binding site is contributed by 43–50 (GPESSGKT).

The protein belongs to the RecA family.

It localises to the cytoplasm. In terms of biological role, can catalyze the hydrolysis of ATP in the presence of single-stranded DNA, the ATP-dependent uptake of single-stranded DNA by duplex DNA, and the ATP-dependent hybridization of homologous single-stranded DNAs. It interacts with LexA causing its activation and leading to its autocatalytic cleavage. The polypeptide is Protein RecA (Neisseria polysaccharea).